Consider the following 527-residue polypeptide: DNA damage-binding protein cmr1 (527 aa).

The disordered stretch occupies residues 35–90 (AGLFPPKSARSSPGGLTKPKKKPAPKKVKKEDEDLVPRRMSSRLRGLAADSEVAKR). Basic residues predominate over residues 52 to 62 (KPKKKPAPKKV). WD repeat units lie at residues 185 to 226 (LTPE…PISA), 249 to 289 (PHTR…SVEK), 296 to 336 (SDDI…RSAV), 341 to 381 (LSEK…HDEP), 388 to 427 (VSRL…AAWK), 450 to 493 (GRWV…LAQL), and 496 to 527 (DGIT…CLWM). Residues 284-303 (TTSVEKYAPESTSDDIPISG) are disordered.

It belongs to the WD repeat DDB2/WDR76 family.

Functionally, DNA-binding protein that binds to both single- and double-stranded DNA. Binds preferentially to UV-damaged DNA. May be involved in DNA-metabolic processes. This Neosartorya fischeri (strain ATCC 1020 / DSM 3700 / CBS 544.65 / FGSC A1164 / JCM 1740 / NRRL 181 / WB 181) (Aspergillus fischerianus) protein is DNA damage-binding protein cmr1.